The sequence spans 156 residues: Putative increased recombination centers protein 11 (156 aa).

Residues 20–42 (AALGATCLLHYLTTSLSIRFFFH) form a helical membrane-spanning segment.

Its subcellular location is the membrane. This chain is Putative increased recombination centers protein 11 (IRC11), found in Saccharomyces cerevisiae (strain ATCC 204508 / S288c) (Baker's yeast).